The primary structure comprises 427 residues: NADPH-dependent stearoyl-CoA 9-desaturase (427 aa).

Fe cation contacts are provided by histidine 90, histidine 94, histidine 125, histidine 129, histidine 130, histidine 304, histidine 308, and histidine 309.

The protein belongs to the fatty acid desaturase type 1 family. As to quaternary structure, interacts with the electron transfer protein Rv3230c to form a functional acyl-CoA desaturase complex. The cofactor is Fe(2+). Post-translationally, is rapidly degraded by a mycobacterial protein degradation system that specifically targets the residues LAA at the C-terminus, leading to a post-translational proteolytic regulation of DesA3 essential activity.

It localises to the cell membrane. It carries out the reaction octadecanoyl-CoA + NADPH + O2 + H(+) = (9Z)-octadecenoyl-CoA + NADP(+) + 2 H2O. Its pathway is lipid metabolism; fatty acid metabolism. In terms of biological role, is likely involved in the aerobic desaturation system responsible for the synthesis of oleic acid from stearoyl-CoA; oleic acid is a precursor of mycobacterial membrane phospholipids and triglycerides. Catalyzes the conversion of stearoyl-CoA to oleoyl-CoA by introduction of a cis double bond between carbons 9 and 10 of the acyl chain. Requires the electron transfer partner Rv3230c to pass two electrons from NADPH to its active site diiron center. Is also able to catalyze the 9-desaturation of palmitoyl-CoA to palmitoleoyl-CoA. This chain is NADPH-dependent stearoyl-CoA 9-desaturase (desA3), found in Mycobacterium tuberculosis (strain CDC 1551 / Oshkosh).